We begin with the raw amino-acid sequence, 468 residues long: Acetyl-CoA decarbonylase/synthase complex subunit gamma 1 (468 aa).

Residues 1-61 form the 4Fe-4S domain; that stretch reads MKINSPLEAY…YAKKLAELDR (61 aa). Cys-18, Cys-21, Cys-26, and Cys-43 together coordinate [4Fe-4S] cluster.

As to quaternary structure, heterodimer of delta and gamma chains. The ACDS complex is made up of alpha, epsilon, beta, gamma and delta chains with a probable stoichiometry of (alpha(2)epsilon(2))(4)-beta(8)-(gamma(1)delta(1))(8). The cofactor is corrinoid. It depends on [4Fe-4S] cluster as a cofactor.

It catalyses the reaction 5,6,7,8-tetrahydrosarcinapterin + methyl-Co(III)-[corrinoid Fe-S protein] = 5-methyltetrahydrosarcinapterin + Co(I)-[corrinoid Fe-S protein] + H(+). It participates in one-carbon metabolism; methanogenesis from acetate. Functionally, part of a complex that catalyzes the reversible cleavage of acetyl-CoA, allowing growth on acetate as sole source of carbon and energy. The protein is Acetyl-CoA decarbonylase/synthase complex subunit gamma 1 of Methanosarcina thermophila.